The primary structure comprises 150 residues: Ribosomal RNA large subunit methyltransferase H (150 aa).

S-adenosyl-L-methionine is bound by residues A100 and 118 to 123 (LSEMTF).

It belongs to the RNA methyltransferase RlmH family. In terms of assembly, homodimer.

It localises to the cytoplasm. The catalysed reaction is pseudouridine(1915) in 23S rRNA + S-adenosyl-L-methionine = N(3)-methylpseudouridine(1915) in 23S rRNA + S-adenosyl-L-homocysteine + H(+). Functionally, specifically methylates the pseudouridine at position 1915 (m3Psi1915) in 23S rRNA. This Helicobacter pylori (strain ATCC 700392 / 26695) (Campylobacter pylori) protein is Ribosomal RNA large subunit methyltransferase H.